A 448-amino-acid polypeptide reads, in one-letter code: Methylenetetrahydrofolate--tRNA-(uracil-5-)-methyltransferase TrmFO (448 aa).

13 to 18 (GAGLAG) serves as a coordination point for FAD.

The protein belongs to the MnmG family. TrmFO subfamily. It depends on FAD as a cofactor.

Its subcellular location is the cytoplasm. The enzyme catalyses uridine(54) in tRNA + (6R)-5,10-methylene-5,6,7,8-tetrahydrofolate + NADH + H(+) = 5-methyluridine(54) in tRNA + (6S)-5,6,7,8-tetrahydrofolate + NAD(+). It catalyses the reaction uridine(54) in tRNA + (6R)-5,10-methylene-5,6,7,8-tetrahydrofolate + NADPH + H(+) = 5-methyluridine(54) in tRNA + (6S)-5,6,7,8-tetrahydrofolate + NADP(+). Catalyzes the folate-dependent formation of 5-methyl-uridine at position 54 (M-5-U54) in all tRNAs. The chain is Methylenetetrahydrofolate--tRNA-(uracil-5-)-methyltransferase TrmFO from Streptococcus pyogenes serotype M28 (strain MGAS6180).